Reading from the N-terminus, the 504-residue chain is Probable chlorophyll(ide) b reductase NYC1, chloroplastic (504 aa).

Residues 1–33 (MAAAAVVHLSVHGRLRRSPELHARPYHRPSLLR) constitute a chloroplast transit peptide. Residues 41 to 63 (ADNGGEEASSSPPPPTTAEARRR) form a disordered region. Transmembrane regions (helical) follow at residues 114 to 134 (YVIT…LSGG) and 141 to 161 (LIWY…ANSV). Residue 175 to 199 (ITGSTRGLGKALAREFLLSGDRVVI) coordinates NAD(+). Tyr339 functions as the Proton acceptor in the catalytic mechanism. The helical transmembrane segment at 479–499 (WVSVFSLSVVCAFIILSSSGG) threads the bilayer.

This sequence belongs to the short-chain dehydrogenases/reductases (SDR) family. In terms of assembly, interacts with NOL to form a complex that acts as a chlorophyll b reductase. Expressed in leaves and stems. Also detected in non-photosynthetic tissues such as roots.

It localises to the plastid. The protein resides in the chloroplast thylakoid membrane. The catalysed reaction is 7(1)-hydroxychlorophyllide a + NAD(+) = chlorophyllide b + NADH + H(+). The enzyme catalyses 7(1)-hydroxychlorophyllide a + NADP(+) = chlorophyllide b + NADPH + H(+). In terms of biological role, required for proper chloroplast degradation. Involved in chlorophyll b degradation. This Oryza sativa subsp. japonica (Rice) protein is Probable chlorophyll(ide) b reductase NYC1, chloroplastic (NYC1).